Reading from the N-terminus, the 398-residue chain is Cobalamin import ATP-binding protein BtuD (398 aa).

In terms of domain architecture, ABC transporter spans 3 to 237 (LDVTGLDVEL…DTIRAAFDAR (235 aa)). ATP is bound at residue 35–42 (GPNGAGKS).

It belongs to the ABC transporter superfamily. As to quaternary structure, the complex is composed of two ATP-binding proteins (BtuD), two transmembrane proteins (BtuC) and a solute-binding protein (BtuF).

It localises to the cell membrane. It carries out the reaction an R-cob(III)alamin(out) + ATP + H2O = an R-cob(III)alamin(in) + ADP + phosphate + H(+). In terms of biological role, required for corrinoid utilization. Probably part of the ABC transporter complex BtuCDF involved in cobalamin (vitamin B12) import. Probably responsible for energy coupling to the transport system. In Halobacterium salinarum (strain ATCC 29341 / DSM 671 / R1), this protein is Cobalamin import ATP-binding protein BtuD (btuD).